A 412-amino-acid polypeptide reads, in one-letter code: Multifunctional CCA protein (412 aa).

Positions 8 and 11 each coordinate ATP. CTP is bound by residues Gly-8 and Arg-11. Mg(2+) contacts are provided by Asp-21 and Asp-23. ATP contacts are provided by Arg-91, Arg-137, and Arg-140. 3 residues coordinate CTP: Arg-91, Arg-137, and Arg-140. The 102-residue stretch at 228 to 329 folds into the HD domain; sequence TGIHTLMTLS…VKLFDSIDAW (102 aa).

It belongs to the tRNA nucleotidyltransferase/poly(A) polymerase family. Bacterial CCA-adding enzyme type 1 subfamily. Monomer. Can also form homodimers and oligomers. Mg(2+) serves as cofactor. The cofactor is Ni(2+).

It carries out the reaction a tRNA precursor + 2 CTP + ATP = a tRNA with a 3' CCA end + 3 diphosphate. The enzyme catalyses a tRNA with a 3' CCA end + 2 CTP + ATP = a tRNA with a 3' CCACCA end + 3 diphosphate. Functionally, catalyzes the addition and repair of the essential 3'-terminal CCA sequence in tRNAs without using a nucleic acid template. Adds these three nucleotides in the order of C, C, and A to the tRNA nucleotide-73, using CTP and ATP as substrates and producing inorganic pyrophosphate. tRNA 3'-terminal CCA addition is required both for tRNA processing and repair. Also involved in tRNA surveillance by mediating tandem CCA addition to generate a CCACCA at the 3' terminus of unstable tRNAs. While stable tRNAs receive only 3'-terminal CCA, unstable tRNAs are marked with CCACCA and rapidly degraded. This is Multifunctional CCA protein from Shigella flexneri.